Reading from the N-terminus, the 337-residue chain is Tryptophan--tRNA ligase (337 aa).

ATP is bound by residues 11 to 13 (QPT) and 19 to 20 (GN). The 'HIGH' region motif lies at 12-20 (PTGNLHLGN). Asp135 lines the L-tryptophan pocket. Residues 147-149 (GED), Val190, and 199-203 (KMSKS) contribute to the ATP site. The 'KMSKS' region motif lies at 199 to 203 (KMSKS).

The protein belongs to the class-I aminoacyl-tRNA synthetase family. As to quaternary structure, homodimer.

The protein localises to the cytoplasm. The catalysed reaction is tRNA(Trp) + L-tryptophan + ATP = L-tryptophyl-tRNA(Trp) + AMP + diphosphate + H(+). Functionally, catalyzes the attachment of tryptophan to tRNA(Trp). The chain is Tryptophan--tRNA ligase from Synechocystis sp. (strain ATCC 27184 / PCC 6803 / Kazusa).